The following is a 388-amino-acid chain: Probable protein phosphatase 2C 43 (388 aa).

The region spanning 53 to 352 (EFSFAVVQAN…DDITVVVVFI (300 aa)) is the PPM-type phosphatase domain. 4 residues coordinate Mn(2+): Asp84, Gly85, Asp284, and Asp343.

Belongs to the PP2C family. Mg(2+) is required as a cofactor. It depends on Mn(2+) as a cofactor.

The catalysed reaction is O-phospho-L-seryl-[protein] + H2O = L-seryl-[protein] + phosphate. The enzyme catalyses O-phospho-L-threonyl-[protein] + H2O = L-threonyl-[protein] + phosphate. In Oryza sativa subsp. japonica (Rice), this protein is Probable protein phosphatase 2C 43.